We begin with the raw amino-acid sequence, 336 residues long: MALSDRLLNAWYNGHPALKLLRPLECLYRRVVTGKRQRFLAGEGAIYQPPVPLIVVGNITVGGTGKTPLILWLVEHCQRLGLRVGVVSRGYGAKPAQLPWRVSAEDCAAVAGDEPLLIVQRCGVPLMIDPDRGRAVQALLAAEPLDLILSDDGLQHYRLARDLELVLIDAARGLGNRRCLPAGPLREPAERLQSVDAVLYNGAVDDRDDGFAFHLKPSVLVNLRSGERRALEHFAPGQALHAVAGIGNPQRFFNTLETLHWRPVPHAFADHAQYSAQALTFTPSLPLVMTEKDAVKCRAFAADDWWYLAVDAQPSPAFVAWFDTQLMRLLPDRLLP.

ATP is bound at residue 60–67 (TVGGTGKT).

The protein belongs to the LpxK family.

It catalyses the reaction a lipid A disaccharide + ATP = a lipid IVA + ADP + H(+). It participates in glycolipid biosynthesis; lipid IV(A) biosynthesis; lipid IV(A) from (3R)-3-hydroxytetradecanoyl-[acyl-carrier-protein] and UDP-N-acetyl-alpha-D-glucosamine: step 6/6. Transfers the gamma-phosphate of ATP to the 4'-position of a tetraacyldisaccharide 1-phosphate intermediate (termed DS-1-P) to form tetraacyldisaccharide 1,4'-bis-phosphate (lipid IVA). The sequence is that of Tetraacyldisaccharide 4'-kinase from Pseudomonas fluorescens (strain ATCC BAA-477 / NRRL B-23932 / Pf-5).